The following is a 431-amino-acid chain: MNKSYPNHSLENFFSTNLSATDDAVFAGIQAEFTRQNEQIELIASENIVSKAVMQAQGTCLTNKYAEGYPGRRYYGGCEHVDTVEAIAIERAKKLFNCEYANVQPHSGAQANGAVKLALLQPGDTILGMSLDAGGHLTHGARPALSGKWFNAVQYGVDRETLEINYDDVRALALEHKPKMIIAGGSAIPRTIDFAKFREIADEVNAILMVDMAHIAGLIATGAHPSPLPHAHVVTTTTHKTLRGPRGGMILTNHEDIIKKINSAVFPGLQGGPLMHVIAAKAVAFGEALGPEFKTYIDSVINNAKVLAEVLQTRGCDIVTGGTDTHLMLVDLRPKGLKGNKAEEALERAGITCNKNGIPFDTEKPMITSGIRLGTPAGTSRGFGAEEFKLIGNWIGDVLDGLVNNPEGDAIVEKRVRKEVKELCSRFPLYQ.

Residues L131 and 135–137 each bind (6S)-5,6,7,8-tetrahydrofolate; that span reads GHL. An N6-(pyridoxal phosphate)lysine modification is found at K240.

The protein belongs to the SHMT family. Homodimer. Requires pyridoxal 5'-phosphate as cofactor.

Its subcellular location is the cytoplasm. It catalyses the reaction (6R)-5,10-methylene-5,6,7,8-tetrahydrofolate + glycine + H2O = (6S)-5,6,7,8-tetrahydrofolate + L-serine. The protein operates within one-carbon metabolism; tetrahydrofolate interconversion. It participates in amino-acid biosynthesis; glycine biosynthesis; glycine from L-serine: step 1/1. Functionally, catalyzes the reversible interconversion of serine and glycine with tetrahydrofolate (THF) serving as the one-carbon carrier. This reaction serves as the major source of one-carbon groups required for the biosynthesis of purines, thymidylate, methionine, and other important biomolecules. Also exhibits THF-independent aldolase activity toward beta-hydroxyamino acids, producing glycine and aldehydes, via a retro-aldol mechanism. The chain is Serine hydroxymethyltransferase 2 from Vibrio parahaemolyticus serotype O3:K6 (strain RIMD 2210633).